A 275-amino-acid chain; its full sequence is MPLMKFKPTSPGRRSAVRVVTPDLHKGAPHAALVESQSRSGGRNHHGRITVRHVGGGAKQHYRIIDFKRNKLGIPARVERIEYDPNRTAHIALLCYVDGERRYIIAPKGLKAGDQVIAGSDAPIKAGNTLPLRNIPVGTTIHCIELKPGKGAQIARAAGAAVQLVAREGIYATLRLRSGEMRKVPVECCATIGEVGNDEHSLEKLGKAGAKRWRGVRPTVRGAAMNPVDHPHGGGEAKAGQGNPHPVTPWGVPTKGYKTRHNKRTQQFIVRDRRG.

2 disordered regions span residues 28–49 (APHAALVESQSRSGGRNHHGRI) and 224–246 (AMNPVDHPHGGGEAKAGQGNPHP).

Belongs to the universal ribosomal protein uL2 family. In terms of assembly, part of the 50S ribosomal subunit. Forms a bridge to the 30S subunit in the 70S ribosome.

Functionally, one of the primary rRNA binding proteins. Required for association of the 30S and 50S subunits to form the 70S ribosome, for tRNA binding and peptide bond formation. It has been suggested to have peptidyltransferase activity; this is somewhat controversial. Makes several contacts with the 16S rRNA in the 70S ribosome. The protein is Large ribosomal subunit protein uL2 of Stenotrophomonas maltophilia (strain R551-3).